We begin with the raw amino-acid sequence, 578 residues long: Probable lysosomal cobalamin transporter (578 aa).

2 helical membrane-spanning segments follow: residues 8 to 28 (LIWV…SVFI) and 46 to 66 (IFAI…VALV). The N-linked (GlcNAc...) asparagine glycan is linked to asparagine 70. 2 helical membrane passes run 95-115 (VVYY…IPFT) and 145-165 (TITF…VPVA). An N-linked (GlcNAc...) asparagine glycan is attached at asparagine 168. Transmembrane regions (helical) follow at residues 188–208 (ALTF…VLYT), 312–332 (LLGG…MLLT), 347–367 (GYIL…VQAA), 375–395 (VIFT…IAIV), 419–439 (LTTA…SMVV), and 506–526 (FFGV…LIVV). The tract at residues 539–578 (RQMDEDAEEAEEEGLLASTGRRLDTAWQDITGRSNRQRDS) is disordered. Acidic residues predominate over residues 540–552 (QMDEDAEEAEEEG).

The protein belongs to the LIMR family. LMBRD1 subfamily.

The protein localises to the lysosome membrane. Probable lysosomal cobalamin transporter. Required to export cobalamin from lysosomes allowing its conversion to cofactors. The protein is Probable lysosomal cobalamin transporter of Aspergillus terreus (strain NIH 2624 / FGSC A1156).